A 61-amino-acid chain; its full sequence is Large ribosomal subunit protein bL28 (61 aa).

The tract at residues 1–27 is disordered; the sequence is MAKDFVTGKKTTFGNTRSHALNSSSRS. Residues 9–27 are compositionally biased toward polar residues; sequence KKTTFGNTRSHALNSSSRS.

Belongs to the bacterial ribosomal protein bL28 family.

This Lactobacillus delbrueckii subsp. bulgaricus (strain ATCC 11842 / DSM 20081 / BCRC 10696 / JCM 1002 / NBRC 13953 / NCIMB 11778 / NCTC 12712 / WDCM 00102 / Lb 14) protein is Large ribosomal subunit protein bL28.